We begin with the raw amino-acid sequence, 485 residues long: Adenosylhomocysteinase (485 aa).

Positions 64, 139, and 205 each coordinate substrate. 206 to 208 serves as a coordination point for NAD(+); sequence TTT. Substrate-binding residues include K235 and D239. NAD(+)-binding positions include N240, 269 to 274, E292, N327, 348 to 350, and N397; these read GYGDVG and IGH.

The protein belongs to the adenosylhomocysteinase family. Homotetramer. It depends on NAD(+) as a cofactor.

The enzyme catalyses S-adenosyl-L-homocysteine + H2O = L-homocysteine + adenosine. It participates in amino-acid biosynthesis; L-homocysteine biosynthesis; L-homocysteine from S-adenosyl-L-homocysteine: step 1/1. Its function is as follows. Adenosylhomocysteine is a competitive inhibitor of S-adenosyl-L-methionine-dependent methyl transferase reactions; therefore adenosylhomocysteinase may play a key role in the control of methylations via regulation of the intracellular concentration of adenosylhomocysteine. This is Adenosylhomocysteinase (SAHH) from Catharanthus roseus (Madagascar periwinkle).